The chain runs to 379 residues: Cell division protein FtsZ (379 aa).

GTP-binding positions include 18-22, 105-107, E136, R140, and D184; these read GGGVN and GTG.

Belongs to the FtsZ family. As to quaternary structure, homodimer. Polymerizes to form a dynamic ring structure in a strictly GTP-dependent manner. Interacts directly with several other division proteins.

The protein localises to the cytoplasm. Functionally, essential cell division protein that forms a contractile ring structure (Z ring) at the future cell division site. The regulation of the ring assembly controls the timing and the location of cell division. One of the functions of the FtsZ ring is to recruit other cell division proteins to the septum to produce a new cell wall between the dividing cells. Binds GTP and shows GTPase activity. This is Cell division protein FtsZ from Mycobacterium bovis (strain ATCC BAA-935 / AF2122/97).